A 285-amino-acid polypeptide reads, in one-letter code: Hydroxyacylglutathione hydrolase, mitochondrial (285 aa).

Residues 1–10 constitute a mitochondrion transit peptide; the sequence is MKFLLQQIRN. Positions 69, 71, 73, 74, 131, 154, and 198 each coordinate Zn(2+).

Zn(2+) serves as cofactor.

Its subcellular location is the mitochondrion matrix. It carries out the reaction an S-(2-hydroxyacyl)glutathione + H2O = a 2-hydroxy carboxylate + glutathione + H(+). The enzyme catalyses (R)-S-lactoylglutathione + H2O = (R)-lactate + glutathione + H(+). Its pathway is secondary metabolite metabolism; methylglyoxal degradation; (R)-lactate from methylglyoxal: step 2/2. Inhibited by various thiol compounds such as glutathione and coenzyme A. Functionally, thiolesterase that catalyzes the hydrolysis of S-D-lactoylglutathione to form glutathione and D-lactic acid. Involved in the metabolism of methylglyoxal, a toxic compound for yeast proliferation, by converting methylglyoxal to lactate via S-D-lactoylglutathione by sequential enzyme reactions catalyzed by glyoxalase I and glyoxalase II. In Saccharomyces cerevisiae (strain ATCC 204508 / S288c) (Baker's yeast), this protein is Hydroxyacylglutathione hydrolase, mitochondrial.